The chain runs to 438 residues: Enolase (438 aa).

2 residues coordinate substrate: H159 and E168. The Proton donor role is filled by E211. Mg(2+)-binding residues include D246, E297, and D322. E297 and D322 together coordinate substrate. K347 functions as the Proton acceptor in the catalytic mechanism. Residues 374–377 (SHRS) and K398 contribute to the substrate site.

The protein belongs to the enolase family. In terms of assembly, homodimer. It depends on Mg(2+) as a cofactor.

It localises to the cytoplasm. The enzyme catalyses (2R)-2-phosphoglycerate = phosphoenolpyruvate + H2O. Its pathway is carbohydrate degradation; glycolysis; pyruvate from D-glyceraldehyde 3-phosphate: step 4/5. In Alternaria alternata (Alternaria rot fungus), this protein is Enolase (ENO).